Reading from the N-terminus, the 134-residue chain is UPF0102 protein Dvul_2148 (134 aa).

The protein belongs to the UPF0102 family.

This is UPF0102 protein Dvul_2148 from Nitratidesulfovibrio vulgaris (strain DP4) (Desulfovibrio vulgaris).